The chain runs to 152 residues: Cytochrome c-type biogenesis protein CcmE (152 aa).

Topologically, residues 1–8 are cytoplasmic; that stretch reads MQARRKTR. A helical; Signal-anchor for type II membrane protein transmembrane segment spans residues 9–29; that stretch reads LYIVLAVLAGLGLTVSLTLYA. Over 30–152 the chain is Periplasmic; the sequence is LSSNIDLFYT…MTPEKTGAQP (123 aa). Residues His130 and Tyr134 each contribute to the heme site. The segment at 133-152 is disordered; that stretch reads NYTPPEVKNAMTPEKTGAQP.

Belongs to the CcmE/CycJ family.

The protein resides in the cell inner membrane. Heme chaperone required for the biogenesis of c-type cytochromes. Transiently binds heme delivered by CcmC and transfers the heme to apo-cytochromes in a process facilitated by CcmF and CcmH. This is Cytochrome c-type biogenesis protein CcmE from Klebsiella pneumoniae (strain 342).